A 34-amino-acid chain; its full sequence is Photosystem II reaction center protein M (34 aa).

Residues 5 to 25 traverse the membrane as a helical segment; it reads ILAFIAIVLFISVPTAFLLII.

Belongs to the PsbM family. In terms of assembly, PSII is composed of 1 copy each of membrane proteins PsbA, PsbB, PsbC, PsbD, PsbE, PsbF, PsbH, PsbI, PsbJ, PsbK, PsbL, PsbM, PsbT, PsbX, PsbY, PsbZ, Psb30/Ycf12, at least 3 peripheral proteins of the oxygen-evolving complex and a large number of cofactors. It forms dimeric complexes.

The protein resides in the plastid. It localises to the chloroplast thylakoid membrane. In terms of biological role, one of the components of the core complex of photosystem II (PSII). PSII is a light-driven water:plastoquinone oxidoreductase that uses light energy to abstract electrons from H(2)O, generating O(2) and a proton gradient subsequently used for ATP formation. It consists of a core antenna complex that captures photons, and an electron transfer chain that converts photonic excitation into a charge separation. This subunit is found at the monomer-monomer interface. The sequence is that of Photosystem II reaction center protein M from Cycas taitungensis (Prince sago).